We begin with the raw amino-acid sequence, 427 residues long: Serine--tRNA ligase (427 aa).

Residue 230-232 participates in L-serine binding; that stretch reads TSE. Residue 261 to 263 coordinates ATP; the sequence is RSE. Glutamate 284 is a binding site for L-serine. 348-351 contributes to the ATP binding site; the sequence is EISS. An L-serine-binding site is contributed by serine 384.

Belongs to the class-II aminoacyl-tRNA synthetase family. Type-1 seryl-tRNA synthetase subfamily. In terms of assembly, homodimer. The tRNA molecule binds across the dimer.

It localises to the cytoplasm. The catalysed reaction is tRNA(Ser) + L-serine + ATP = L-seryl-tRNA(Ser) + AMP + diphosphate + H(+). It catalyses the reaction tRNA(Sec) + L-serine + ATP = L-seryl-tRNA(Sec) + AMP + diphosphate + H(+). It functions in the pathway aminoacyl-tRNA biosynthesis; selenocysteinyl-tRNA(Sec) biosynthesis; L-seryl-tRNA(Sec) from L-serine and tRNA(Sec): step 1/1. Functionally, catalyzes the attachment of serine to tRNA(Ser). Is also able to aminoacylate tRNA(Sec) with serine, to form the misacylated tRNA L-seryl-tRNA(Sec), which will be further converted into selenocysteinyl-tRNA(Sec). This is Serine--tRNA ligase from Desulforapulum autotrophicum (strain ATCC 43914 / DSM 3382 / VKM B-1955 / HRM2) (Desulfobacterium autotrophicum).